The chain runs to 458 residues: Phosphoglucosamine mutase (458 aa).

Ser-102 (phosphoserine intermediate) is an active-site residue. Ser-102, Asp-252, Asp-254, and Asp-256 together coordinate Mg(2+). Ser-102 is modified (phosphoserine).

It belongs to the phosphohexose mutase family. The cofactor is Mg(2+). Post-translationally, activated by phosphorylation.

The catalysed reaction is alpha-D-glucosamine 1-phosphate = D-glucosamine 6-phosphate. Its function is as follows. Catalyzes the conversion of glucosamine-6-phosphate to glucosamine-1-phosphate. The sequence is that of Phosphoglucosamine mutase from Anaeromyxobacter dehalogenans (strain 2CP-C).